Here is a 227-residue protein sequence, read N- to C-terminus: Orotidine 5'-phosphate decarboxylase (227 aa).

Substrate is bound by residues Asp8, Lys30, 57 to 66 (DLKFHDIPNT), Thr116, Arg177, Gln186, Gly206, and Arg207. Catalysis depends on Lys59, which acts as the Proton donor.

Belongs to the OMP decarboxylase family. Type 1 subfamily. In terms of assembly, homodimer.

It carries out the reaction orotidine 5'-phosphate + H(+) = UMP + CO2. It functions in the pathway pyrimidine metabolism; UMP biosynthesis via de novo pathway; UMP from orotate: step 2/2. Functionally, catalyzes the decarboxylation of orotidine 5'-monophosphate (OMP) to uridine 5'-monophosphate (UMP). The sequence is that of Orotidine 5'-phosphate decarboxylase from Acinetobacter baylyi (strain ATCC 33305 / BD413 / ADP1).